Here is a 335-residue protein sequence, read N- to C-terminus: DNA-directed RNA polymerase subunit alpha (335 aa).

The tract at residues 1 to 233 (MMLNATEFLT…QQISIFVDLE (233 aa)) is alpha N-terminal domain (alpha-NTD). An alpha C-terminal domain (alpha-CTD) region spans residues 247-335 (VDPVLLRPVD…VDDRFSYRSR (89 aa)).

This sequence belongs to the RNA polymerase alpha chain family. Homodimer. The RNAP catalytic core consists of 2 alpha, 1 beta, 1 beta' and 1 omega subunit. When a sigma factor is associated with the core the holoenzyme is formed, which can initiate transcription.

The enzyme catalyses RNA(n) + a ribonucleoside 5'-triphosphate = RNA(n+1) + diphosphate. In terms of biological role, DNA-dependent RNA polymerase catalyzes the transcription of DNA into RNA using the four ribonucleoside triphosphates as substrates. The chain is DNA-directed RNA polymerase subunit alpha from Psychrobacter sp. (strain PRwf-1).